The chain runs to 107 residues: Circadian clock oscillator protein KaiB (107 aa).

It belongs to the KaiB family. In terms of assembly, may undergo a major conformational rearrangment; in the free state forms homooligomers. When bound to KaiC switches to a monomeric thioredoxin-fold (KaiB(fs)). The active oscillator complex is probably KaiC(6):KaiB(6).

Functionally, component of the KaiBC clock protein complex, which constitutes the main circadian regulator in cyanobacteria; it may modify the ATPase activity of KaiC. Its function is as follows. Does not stimulate dephosphorylation of endogenous KaiC, although it does stimulate dephosphorylation of KiaC from S.elongatus strain PCC 7942. Reduces the ATPase activity of KaiC by about half in vitro, which may be its function in vivo. In terms of biological role, may be a metamorphic protein which reversibly switches between an inactive tetrameric fold and a rare, thioredoxin-like monomeric fold (KaiB(fs)). KaiB(fs) binds phospho-KaiC, and perhaps clock output effectors. The protein is Circadian clock oscillator protein KaiB of Prochlorococcus marinus subsp. pastoris (strain CCMP1986 / NIES-2087 / MED4).